We begin with the raw amino-acid sequence, 112 residues long: Frizzy aggregation protein FrzB (112 aa).

In terms of biological role, necessary for proper aggregation of cells to form fruiting bodies. FRZ genes define a system of signal transduction analogous to the enterobacterial chemotaxis systems. The protein is Frizzy aggregation protein FrzB (frzB) of Myxococcus xanthus.